The following is a 1137-amino-acid chain: UDP-N-acetylglucosamine transferase subunit ALG13 (1137 aa).

Residues methionine 1–cysteine 125 form a glycosyltransferase activity region. The deubiquitinase activity stretch occupies residues threonine 126 to valine 400. The region spanning leucine 231 to lysine 352 is the OTU domain. Residue aspartate 239 is the For deubiquitinase activity of the active site. Cysteine 242 (nucleophile; for deubiquitinase activity) is an active-site residue. Histidine 345 functions as the For deubiquitinase activity in the catalytic mechanism. Residues glutamine 492–proline 552 form the Tudor domain. Disordered regions lie at residues histidine 641–asparagine 660 and isoleucine 911–aspartate 974. 2 stretches are compositionally biased toward pro residues: residues leucine 918–alanine 946 and glutamine 956–serine 967.

Belongs to the glycosyltransferase 28 family. Forms with ALG14 the active heterodimeric UDP-N-acetylglucosamine transferase complex. As to quaternary structure, not able to interact with ALG14 to form an active UDP-N-acetylglucosamine transferase complex.

The protein resides in the endoplasmic reticulum membrane. It carries out the reaction an N-acetyl-alpha-D-glucosaminyl-diphospho-di-trans,poly-cis-dolichol + UDP-N-acetyl-alpha-D-glucosamine = an N,N'-diacetylchitobiosyl-diphospho-di-trans,poly-cis-dolichol + UDP + H(+). The protein operates within protein modification; protein glycosylation. Catalytic subunit of the UDP-N-acetylglucosamine transferase complex that operates in the biosynthetic pathway of dolichol-linked oligosaccharides, the glycan precursors employed in protein asparagine (N)-glycosylation. The assembly of dolichol-linked oligosaccharides begins on the cytosolic side of the endoplasmic reticulum membrane and finishes in its lumen. The sequential addition of sugars to dolichol pyrophosphate produces dolichol-linked oligosaccharides containing fourteen sugars, including two GlcNAcs, nine mannoses and three glucoses. Once assembled, the oligosaccharide is transferred from the lipid to nascent proteins by oligosaccharyltransferases. On the cytoplasmic face of the endoplasmic reticulum, the dimeric ALG13/ALG14 complex catalyzes the second step of dolichol pyrophosphate biosynthesis, transferring a beta1,4-linked N-acetylglucosamine (GlcNAc) from UDP-GlcNAc to GlcNAc-pyrophosphatedolichol (Gn-PDol) to produce N,N'-diacetylchitobiosyl diphosphodolichol. N,N'-diacetylchitobiosyl diphosphodolichol is a substrate for ALG1, the following enzyme in the biosynthetic pathway. Its function is as follows. No glycosyltransferase or deubiquitinase activity is detected for this potential multifunctional enzyme. This Homo sapiens (Human) protein is UDP-N-acetylglucosamine transferase subunit ALG13.